Reading from the N-terminus, the 215-residue chain is Oligoribonuclease (215 aa).

Residues 5 to 170 (LVWIDCEMTG…ADIHESIREL (166 aa)) form the Exonuclease domain. Y127 is an active-site residue.

This sequence belongs to the oligoribonuclease family.

It localises to the cytoplasm. Functionally, 3'-to-5' exoribonuclease specific for small oligoribonucleotides. This Mycobacterium ulcerans (strain Agy99) protein is Oligoribonuclease.